The sequence spans 375 residues: Glutamate 5-kinase (375 aa).

K17 is an ATP binding site. 3 residues coordinate substrate: S57, D144, and N156. 176-177 (TD) is a binding site for ATP. One can recognise a PUA domain in the interval 283–361 (KGRLWLDTGA…HQIEQILGYV (79 aa)).

This sequence belongs to the glutamate 5-kinase family.

Its subcellular location is the cytoplasm. The enzyme catalyses L-glutamate + ATP = L-glutamyl 5-phosphate + ADP. It functions in the pathway amino-acid biosynthesis; L-proline biosynthesis; L-glutamate 5-semialdehyde from L-glutamate: step 1/2. Its function is as follows. Catalyzes the transfer of a phosphate group to glutamate to form L-glutamate 5-phosphate. This Nitrosococcus oceani (strain ATCC 19707 / BCRC 17464 / JCM 30415 / NCIMB 11848 / C-107) protein is Glutamate 5-kinase.